The following is a 294-amino-acid chain: Signal peptidase I (294 aa).

The segment at 1-59 (MTETTDSPSERQPGPAEPELSSRDPDIAGQVFDAAPFDAAPDADSEGDSKAAKTDEPRP) is disordered. The Cytoplasmic portion of the chain corresponds to 1 to 66 (MTETTDSPSE…PRPAKRSTLR (66 aa)). The segment covering 47-59 (GDSKAAKTDEPRP) has biased composition (basic and acidic residues). Residues 67 to 87 (EFAVLAVIAVVLYYVMLTFVA) form a helical membrane-spanning segment. Residues 88–294 (RPYLIPSESM…VRSVNPQQGR (207 aa)) lie on the Extracellular side of the membrane. Catalysis depends on residues S96 and K174.

This sequence belongs to the peptidase S26 family.

The protein resides in the cell membrane. It carries out the reaction Cleavage of hydrophobic, N-terminal signal or leader sequences from secreted and periplasmic proteins.. The chain is Signal peptidase I (lepB) from Mycobacterium tuberculosis (strain CDC 1551 / Oshkosh).